A 208-amino-acid chain; its full sequence is MKGLFVTIEGPEGSGKTTLIQGLLPYFEQKEQKVMATREPGGIAISEDIRTILHKQEYTMMEARTEALLYAAARRQHLVEKVMPALNEDYLVLCDRFIDSSLAYQGYARGLGMDKVFEINRFATEDCMPSLTIYLDIEPEVGLARIAKDAGREVNRLDMEDISFHKRVREGYLQVVERFSDRIVLVNADQPMEKLIEEVIQVIEDKLL.

10 to 17 (GPEGSGKT) lines the ATP pocket.

Belongs to the thymidylate kinase family.

It carries out the reaction dTMP + ATP = dTDP + ADP. Its function is as follows. Phosphorylation of dTMP to form dTDP in both de novo and salvage pathways of dTTP synthesis. The protein is Thymidylate kinase of Bacillus cereus (strain AH187).